The following is a 314-amino-acid chain: MIKVVFMGTPDFSVPVLRRLIEDGYEVVGVVTQPDRPVGRKKVLTPTPVKVEAEKHGIPVLQPLKIREKDEYEKVLALEPDLIVTAAFGQIVPNEILEAPKYGCINVHASLLPELRGGAPIHYAIMEGKEKTGITIMYMVEKLDAGDILTQVEVEIEERETTGSLFDKLSEAGAHLLSKTVPLLIQGKLEPIKQNEEEVTFAYNIKREQEKIDWTKTGEEVYNHIRGLNPWPVAYTTLAGQVVKVWWGEKVPITEPAEAGTIVAIEEDGFVVATSNETGVKITELQPSGKKRMSCSQFLRGTKPEIGTKLGENA.

110–113 is a (6S)-5,6,7,8-tetrahydrofolate binding site; that stretch reads SLLP.

This sequence belongs to the Fmt family.

The enzyme catalyses L-methionyl-tRNA(fMet) + (6R)-10-formyltetrahydrofolate = N-formyl-L-methionyl-tRNA(fMet) + (6S)-5,6,7,8-tetrahydrofolate + H(+). Attaches a formyl group to the free amino group of methionyl-tRNA(fMet). The formyl group appears to play a dual role in the initiator identity of N-formylmethionyl-tRNA by promoting its recognition by IF2 and preventing the misappropriation of this tRNA by the elongation apparatus. The chain is Methionyl-tRNA formyltransferase from Bacillus cereus (strain B4264).